The following is an 891-amino-acid chain: Tubulin polyglutamylase TTLL6 (891 aa).

Disordered stretches follow at residues Met-1–Ala-25 and Ser-44–Lys-106. Over residues Ser-63–Glu-76 the composition is skewed to basic and acidic residues. Low complexity predominate over residues Gly-88–Gln-99. Residues Lys-106–Glu-449 form the TTL domain. ATP-binding positions include Lys-223, Gln-229–Gly-230, Gln-251–Ile-254, and Lys-264–Asp-266. Gln-229 is an a protein binding site. Arg-290 is an L-glutamate binding site. Position 312 to 313 (Thr-312 to Asn-313) interacts with ATP. Residues Tyr-314, Ser-315, and Lys-332 each contribute to the L-glutamate site. Residues Asp-395, Glu-408, and Asn-410 each coordinate Mg(2+). His-411 contacts a protein. The segment at Arg-420 to Ser-499 is c-MTBD region. Lys-426 is a binding site for L-glutamate. Disordered stretches follow at residues Gln-546–Ala-584, Gly-607–Ala-636, Thr-687–Ser-711, and Asn-800–Gly-820. Polar residues predominate over residues Thr-687–Pro-699.

The protein belongs to the tubulin--tyrosine ligase family. In terms of assembly, found in a complex with CEP41. Requires Mg(2+) as cofactor.

It is found in the cytoplasm. The protein localises to the cytoskeleton. It localises to the cilium axoneme. Its subcellular location is the cilium basal body. It carries out the reaction L-glutamyl-[protein] + L-glutamate + ATP = gamma-L-glutamyl-L-glutamyl-[protein] + ADP + phosphate + H(+). The enzyme catalyses (L-glutamyl)(n)-gamma-L-glutamyl-L-glutamyl-[protein] + L-glutamate + ATP = (L-glutamyl)(n+1)-gamma-L-glutamyl-L-glutamyl-[protein] + ADP + phosphate + H(+). Its function is as follows. Polyglutamylase which modifies both tubulin and non-tubulin proteins, generating alpha-linked polyglutamate side chains on the gamma-carboxyl group of specific glutamate residues of target proteins. Preferentially mediates ATP-dependent long polyglutamate chain elongation over the initiation step of the polyglutamylation reaction. Preferentially modifies the alpha-tubulin tail over a beta-tail. Promotes tubulin polyglutamylation which stimulates spastin/SPAST-mediated microtubule severing, thereby regulating microtubule functions. Mediates microtubule polyglutamylation in primary cilia axoneme, which is important for ciliary structural formation and motility. Mediates microtubule polyglutamylation in motile cilia, necessary for the regulation of ciliary coordinated beating. Polyglutamylates non-tubulin protein nucleotidyltransferase CGAS, leading to CGAS DNA-binding inhibition, thereby preventing antiviral defense response. In Homo sapiens (Human), this protein is Tubulin polyglutamylase TTLL6.